Here is a 111-residue protein sequence, read N- to C-terminus: uncharacterized protein (111 aa).

This sequence to B.subtilis XkdW.

This is an uncharacterized protein from Bacillus subtilis (strain 168).